A 1305-amino-acid chain; its full sequence is ABC transporter FPSE_09185 (1305 aa).

Asparagine 28 carries an N-linked (GlcNAc...) asparagine glycan. 6 consecutive transmembrane segments (helical) span residues 44–64 (FCVYVVGALASIGVGVTMPLM), 99–119 (LYIVGLFLGRWLLNSINKFCF), 172–192 (RLGTFVTYVSTIIAAIAVAFT), 199–219 (IVSASLLVYIAIIIAIVVPIY), 277–297 (IIGAQTGLVFFGIFGVFGLAF), and 312–332 (VGVVIIVLTSVMLILFAFSYL). An ABC transmembrane type-1 1 domain is found at 48–348 (VVGALASIGV…ISQAMVAATE (301 aa)). The region spanning 372–663 (LIFKDVTFEY…ENGVYYSLVE (292 aa)) is the ABC transporter 1 domain. 407–414 (GPSGSGKS) is an ATP binding site. Residues 434-454 (EAATPRSSKEGERDNHDERKY) form a disordered region. The segment covering 440–454 (SSKEGERDNHDERKY) has biased composition (basic and acidic residues). Residues asparagine 468, asparagine 507, and asparagine 525 are each glycosylated (N-linked (GlcNAc...) asparagine). Transmembrane regions (helical) follow at residues 737-757 (FLLITIASMGVGAATPLQAWL), 780-800 (GFMWLALAGGVGVAYFFQCWI), 851-873 (GVFGLNLASATSSVFTIVGCLII), 877-899 (FGWKLGLVGLCVTVPIMMVSGFW), 964-984 (AVIFGFAESATLGCQALILWY), and 999-1019 (FMVSYMAIINGVEYAGQILGV). The ABC transmembrane type-1 2 domain occupies 738 to 1025 (LLITIASMGV…ILGVAPSAAQ (288 aa)). The segment at 1038-1057 (DSNRSSQEAEKSGPTVEDTD) is disordered. N-linked (GlcNAc...) asparagine glycans are attached at residues asparagine 1040, asparagine 1066, and asparagine 1075. Positions 1062–1300 (IELCNVSFKY…RGIYWDMCQT (239 aa)) constitute an ABC transporter 2 domain. Residue 1096-1103 (GPSGCGKT) participates in ATP binding. Asparagine 1125 carries N-linked (GlcNAc...) asparagine glycosylation.

It belongs to the ABC transporter superfamily. ABCB family. Multidrug resistance exporter (TC 3.A.1.201) subfamily.

The protein resides in the membrane. ABC transporter; part of the gene cluster that mediates the biosynthesis of the lipopeptides W493 A and B. W493 A and B consist of six amino acid residues D-allo-thr, L-Ala, D-Ala, L-Gln, D-Tyr, and L-Val/L-Ile linked to a 3-hydroxy-4-methyltetradecanoic acid polyketide chain. May be involved in excretion or internal transport of W493 A and B. In Fusarium pseudograminearum (strain CS3096) (Wheat and barley crown-rot fungus), this protein is ABC transporter FPSE_09185.